We begin with the raw amino-acid sequence, 1321 residues long: Bile salt export pump (1321 aa).

Residues 1-62 are Cytoplasmic-facing; the sequence is MSDSVILRSV…FSSWTDIWLM (62 aa). Residues 62–385 enclose the ABC transmembrane type-1 1 domain; sequence MCMGSLCACI…ASPCLEAFAA (324 aa). A helical transmembrane segment spans residues 63-83; it reads CMGSLCACIHGIAQPGVLLIF. At 84 to 147 the chain is on the extracellular side; the sequence is GTMTDVFIDY…MIRFAGYYAG (64 aa). Asn-109, Asn-116, Asn-122, and Asn-125 each carry an N-linked (GlcNAc...) asparagine glycan. A helical membrane pass occupies residues 148–168; the sequence is IGIAVLTTGYIQICFWGIAAA. The Cytoplasmic segment spans residues 169 to 215; sequence HQIQKMRKSYFRKIMRMGIGWVDCNSVGKLNTPFSVDFNKINDSSAD. Residues 216–236 traverse the membrane as a helical segment; it reads QLAIFIQGMTSPIFGFLVGFS. At 237–240 the chain is on the extracellular side; the sequence is QWWK. Residues 241-261 form a helical membrane-spanning segment; the sequence is LTLVIISVSPLIGLGAAIIGL. At 262–319 the chain is on the cytoplasmic side; the sequence is SVSKFTDYELKAYAKAGSVADEVISSMRTVAAFGGEKKEVERYEKNLVFAQRWGIRKG. Residues 320–340 traverse the membrane as a helical segment; that stretch reads IVMGFFTGYMWCLIFFCYALA. The Extracellular portion of the chain corresponds to 341–353; it reads FWYGSKLVLEEGE. Residues 354–374 traverse the membrane as a helical segment; sequence YSPGALVQIFLSVIIGALNLG. The Cytoplasmic segment spans residues 375 to 755; that stretch reads NASPCLEAFA…KLNAPEWPYM (381 aa). Positions 420 to 656 constitute an ABC transporter 1 domain; that stretch reads IEFHNVTFHY…KGVYFALVTL (237 aa). 455–462 serves as a coordination point for ATP; sequence GPSGAGKS. The residue at position 586 (Thr-586) is a Phosphothreonine. Ser-587 is subject to Phosphoserine. Residues 651-672 are interaction with HAX1; that stretch reads FALVTLQSQRNQGDQEENEKDA. The tract at residues 659–735 is disordered; that stretch reads QRNQGDQEEN…KDKDLPAQED (77 aa). Acidic residues predominate over residues 664 to 677; it reads DQEENEKDATEDDI. Phosphoserine occurs at positions 690, 701, and 704. Residues 714–731 show a composition bias toward basic and acidic residues; sequence VEDHKSTHEEDRKDKDLP. Residues 755 to 1043 enclose the ABC transmembrane type-1 2 domain; sequence MLLGSMGAAV…ASSYTPSYAK (289 aa). A helical transmembrane segment spans residues 756 to 776; that stretch reads LLGSMGAAVNGAVTPLYAFLF. At 777–794 the chain is on the extracellular side; sequence SQILGTFSLPDKEEQRSQ. A helical membrane pass occupies residues 795–815; the sequence is INGICLLFVTLGCVSFFTQFL. Residues 816-869 are Cytoplasmic-facing; that stretch reads QGYTFAKSGELLTKRLRKFGFRAMLGQDIGWFDDLRNSPGALTTRLATDASQVQ. A run of 2 helical transmembrane segments spans residues 870-890 and 891-911; these read GATG…TVAM and IIAF…FPFL. At 912-979 the chain is on the cytoplasmic side; it reads ALSGALQTKM…PYKMAIKKAN (68 aa). The chain crosses the membrane as a helical span at residues 980–1000; the sequence is VYGLCFGFSQCITFIANSASY. Over 1001-1011 the chain is Extracellular; that stretch reads RYGGYLISNEG. The chain crosses the membrane as a helical span at residues 1012–1032; that stretch reads LHFSYVFRVISAVVLSATALG. At 1033–1321 the chain is on the cytoplasmic side; it reads RASSYTPSYA…KLVTTGSPIS (289 aa). Positions 1078-1316 constitute an ABC transporter 2 domain; the sequence is IDFVDCKFTY…KGAYYKLVTT (239 aa). Residue 1113–1120 participates in ATP binding; the sequence is GSSGCGKS. Phosphoserine is present on residues Ser-1214 and Ser-1321.

Belongs to the ABC transporter superfamily. ABCB family. Multidrug resistance exporter (TC 3.A.1.201) subfamily. In terms of assembly, interacts with HAX1. Interacts with the adapter protein complex 2 (AP-2) throught AP2A2 or AP2A1; this interaction regulates cell membrane expression of ABCB11 through its internalization in a clathrin-dependent manner and its subsequent degradation. N-glycosylated. Post-translationally, ubiquitinated; short-chain ubiquitination regulates cell-Surface expression of ABCB11. Expressed predominantly, if not exclusively in the liver, where it was further localized to the canalicular microvilli and to subcanalicular vesicles of the hepatocytes by in situ.

The protein resides in the apical cell membrane. It is found in the recycling endosome membrane. The protein localises to the endosome. It localises to the cell membrane. The catalysed reaction is cholate(in) + ATP + H2O = cholate(out) + ADP + phosphate + H(+). The enzyme catalyses taurocholate(in) + ATP + H2O = taurocholate(out) + ADP + phosphate + H(+). It carries out the reaction glycocholate(in) + ATP + H2O = glycocholate(out) + ADP + phosphate + H(+). It catalyses the reaction glycochenodeoxycholate(in) + ATP + H2O = glycochenodeoxycholate(out) + ADP + phosphate + H(+). The catalysed reaction is taurochenodeoxycholate(in) + ATP + H2O = taurochenodeoxycholate(out) + ADP + phosphate + H(+). The enzyme catalyses glycoursodeoxycholate(in) + ATP + H2O = glycoursodeoxycholate(out) + ADP + phosphate + H(+). It carries out the reaction tauroursodeoxycholate(in) + ATP + H2O = tauroursodeoxycholate(out) + ADP + phosphate + H(+). It catalyses the reaction taurodeoxycholate(in) + ATP + H2O = taurodeoxycholate(out) + ADP + phosphate + H(+). The catalysed reaction is taurolithocholate 3-sulfate(in) + ATP + H2O = taurolithocholate 3-sulfate(out) + ADP + phosphate + H(+). The enzyme catalyses pravastatin(in) + ATP + H2O = pravastatin(out) + ADP + phosphate + H(+). With respect to regulation, the uptake of taurocholate is inhibited by taurolithocholate sulfate with an IC(50) of 9 uM. Pravastatin competitively inhibits the transport of taurocholic acid. Cyclosporin A, glibenclamide, rifampicin and troglitazonestrongly competitively inhibit the transport activity of taurocholate. The canalicular transport activity of taurocholate is strongly dependent on canalicular membrane cholesterol content. The uptake of taurocholate is increased by short- and medium-chain fatty acids. Cholesterol increases transport capacity of taurocholate without affecting the affinity for the substrate. Catalyzes the transport of the major hydrophobic bile salts, such as taurine and glycine-conjugated cholic acid across the canalicular membrane of hepatocytes in an ATP-dependent manner, therefore participates in hepatic bile acid homeostasis and consequently to lipid homeostasis through regulation of biliary lipid secretion in a bile salts dependent manner. Transports taurine-conjugated bile salts more rapidly than glycine-conjugated bile salts. Also transports non-bile acid compounds, such as pravastatin and fexofenadine in an ATP-dependent manner and may be involved in their biliary excretion. The sequence is that of Bile salt export pump from Oryctolagus cuniculus (Rabbit).